Here is a 210-residue protein sequence, read N- to C-terminus: Regulator of G-protein signaling 17 (210 aa).

Residues 1-21 (MRKRQQSQNEGTQAVSQAPGN) are disordered. The region spanning 84–200 (NFDKMMKTPA…LNSQIYKAFV (117 aa)) is the RGS domain. Phosphotyrosine is present on Tyr-137.

As to quaternary structure, interacts with GNAI1 and GNAQ. Interacts with GNAZ and GNAI2. Interacts with OPRM1. Forms a complex with mu-opioid receptors and G(alpha)z/i2 subunits, including GNAZ and GNAI2; the formation of this complex results in mu-opioid receptor desensitization. Interacts with HINT1. N- and O-glycosylated in synapsomal membranes. Post-translationally, serine phosphorylated in synapsomal membranes. In terms of processing, sumoylated with SUMO1 and SUM02 in synaptosomes. The sumoylated forms act as a scaffold for sequestering mu-opioid receptor-activated G(alpha) subunits. Desumoylated by HINT1. Detected in brain (at protein level). Highly expressed in the hypothalamus, periaqueductal gray matter, and pons-medulla. Lower levels in the thalamus, cortex and spinal cord. Weak expression in the striatum and cerebellum.

The protein localises to the membrane. It localises to the synapse. It is found in the synaptosome. Its subcellular location is the nucleus. The protein resides in the cytoplasm. Its function is as follows. Regulates G protein-coupled receptor signaling cascades, including signaling via muscarinic acetylcholine receptor CHRM2 and dopamine receptor DRD2. Inhibits signal transduction by increasing the GTPase activity of G protein alpha subunits, thereby driving them into their inactive GDP-bound form. Binds selectively to GNAZ and GNAI2 subunits, accelerates their GTPase activity and regulates their signaling activities. Negatively regulates mu-opioid receptor-mediated activation of the G-proteins. The polypeptide is Regulator of G-protein signaling 17 (Rgs17) (Mus musculus (Mouse)).